A 310-amino-acid polypeptide reads, in one-letter code: Membrane protein insertase YidC 2 (310 aa).

An N-terminal signal peptide occupies residues methionine 1–glycine 23. Residue cysteine 24 is the site of N-palmitoyl cysteine attachment. Cysteine 24 carries the S-diacylglycerol cysteine lipid modification. Transmembrane regions (helical) follow at residues proline 33–alanine 53, leucine 58–leucine 78, phenylalanine 135–phenylalanine 155, leucine 180–proline 200, and valine 219–phenylalanine 239. Residues asparagine 266 to glycine 310 form a disordered region. Polar residues predominate over residues threonine 281–lysine 297. A compositionally biased stretch (basic residues) spans lysine 298–glycine 310.

It belongs to the OXA1/ALB3/YidC family. Type 2 subfamily.

The protein localises to the cell membrane. Functionally, required for the insertion and/or proper folding and/or complex formation of integral membrane proteins into the membrane. Involved in integration of membrane proteins that insert both dependently and independently of the Sec translocase complex, as well as at least some lipoproteins. The protein is Membrane protein insertase YidC 2 of Streptococcus agalactiae serotype V (strain ATCC BAA-611 / 2603 V/R).